The sequence spans 474 residues: uncharacterized protein (474 aa).

Positions methionine 1 to glycine 23 are cleaved as a signal peptide. Cysteine 24 carries N-palmitoyl cysteine lipidation. A lipid anchor (S-diacylglycerol cysteine) is attached at cysteine 24.

It belongs to the MG067/MG068/MG395 family.

The protein resides in the cell membrane. This is an uncharacterized protein from Mycoplasma genitalium (strain ATCC 33530 / DSM 19775 / NCTC 10195 / G37) (Mycoplasmoides genitalium).